We begin with the raw amino-acid sequence, 473 residues long: Photosystem II CP43 reaction center protein (473 aa).

A propeptide spanning residues 1 to 14 (MKTLYSLRRFYPVE) is cleaved from the precursor. T15 carries the post-translational modification N-acetylthreonine. T15 bears the Phosphothreonine mark. 5 consecutive transmembrane segments (helical) span residues 69 to 93 (LFEV…PHLA), 134 to 155 (LLGP…KDRN), 178 to 200 (KALS…RKIT), 255 to 275 (KPFA…LSYS), and 291 to 312 (WFNN…ASQA). E367 contacts [CaMn4O5] cluster. Residues 447-471 (RARAAAAGFEKGIDRDFEPVLSMTP) form a helical membrane-spanning segment.

It belongs to the PsbB/PsbC family. PsbC subfamily. PSII is composed of 1 copy each of membrane proteins PsbA, PsbB, PsbC, PsbD, PsbE, PsbF, PsbH, PsbI, PsbJ, PsbK, PsbL, PsbM, PsbT, PsbX, PsbY, PsbZ, Psb30/Ycf12, at least 3 peripheral proteins of the oxygen-evolving complex and a large number of cofactors. It forms dimeric complexes. Binds multiple chlorophylls and provides some of the ligands for the Ca-4Mn-5O cluster of the oxygen-evolving complex. It may also provide a ligand for a Cl- that is required for oxygen evolution. PSII binds additional chlorophylls, carotenoids and specific lipids. serves as cofactor.

It localises to the plastid. It is found in the chloroplast thylakoid membrane. One of the components of the core complex of photosystem II (PSII). It binds chlorophyll and helps catalyze the primary light-induced photochemical processes of PSII. PSII is a light-driven water:plastoquinone oxidoreductase, using light energy to abstract electrons from H(2)O, generating O(2) and a proton gradient subsequently used for ATP formation. This chain is Photosystem II CP43 reaction center protein, found in Pelargonium hortorum (Common geranium).